The primary structure comprises 835 residues: Protein translocase subunit SecA (835 aa).

ATP-binding positions include Gln85, 103 to 107, and Asp492; that span reads GEGKT. 4 residues coordinate Zn(2+): Cys819, Cys821, Cys830, and Cys831.

The protein belongs to the SecA family. As to quaternary structure, monomer and homodimer. Part of the essential Sec protein translocation apparatus which comprises SecA, SecYEG and auxiliary proteins SecDF. Other proteins may also be involved. Zn(2+) is required as a cofactor.

It is found in the cell membrane. The protein resides in the cytoplasm. It catalyses the reaction ATP + H2O + cellular proteinSide 1 = ADP + phosphate + cellular proteinSide 2.. Part of the Sec protein translocase complex. Interacts with the SecYEG preprotein conducting channel. Has a central role in coupling the hydrolysis of ATP to the transfer of proteins into and across the cell membrane, serving as an ATP-driven molecular motor driving the stepwise translocation of polypeptide chains across the membrane. The protein is Protein translocase subunit SecA of Clostridium botulinum (strain Loch Maree / Type A3).